The following is a 248-amino-acid chain: Adenosylcobinamide-GDP ribazoletransferase (248 aa).

Helical transmembrane passes span 32–52 (FPLV…IGMV), 60–80 (ALLV…DGLA), 103–123 (AVGS…WIAL), 134–154 (WIVS…SVMT), 170–190 (AGGW…VLVM), 195–215 (LPIV…GMLA), and 227–247 (LGAS…LLLF).

This sequence belongs to the CobS family. Mg(2+) serves as cofactor.

The protein localises to the cell inner membrane. It carries out the reaction alpha-ribazole + adenosylcob(III)inamide-GDP = adenosylcob(III)alamin + GMP + H(+). The catalysed reaction is alpha-ribazole 5'-phosphate + adenosylcob(III)inamide-GDP = adenosylcob(III)alamin 5'-phosphate + GMP + H(+). It participates in cofactor biosynthesis; adenosylcobalamin biosynthesis; adenosylcobalamin from cob(II)yrinate a,c-diamide: step 7/7. Functionally, joins adenosylcobinamide-GDP and alpha-ribazole to generate adenosylcobalamin (Ado-cobalamin). Also synthesizes adenosylcobalamin 5'-phosphate from adenosylcobinamide-GDP and alpha-ribazole 5'-phosphate. This Prosthecochloris aestuarii (strain DSM 271 / SK 413) protein is Adenosylcobinamide-GDP ribazoletransferase.